The sequence spans 706 residues: Glutamine-dependent NAD(+) synthetase (706 aa).

The 271-residue stretch at 5–275 folds into the CN hydrolase domain; the sequence is VTVATCALNQ…VEVLTATLDL (271 aa). E45 (proton acceptor; for glutaminase activity) is an active-site residue. K114 serves as the catalytic For glutaminase activity. The active-site Nucleophile; for glutaminase activity is C175. Residues 325–706 are ligase; that stretch reads YHSPAEEISL…RQRQELDGVD (382 aa). Residue 355 to 362 participates in ATP binding; it reads PLSGGVDS. S357 is an active-site residue.

The protein in the C-terminal section; belongs to the NAD synthetase family. Homohexamer.

It carries out the reaction deamido-NAD(+) + L-glutamine + ATP + H2O = L-glutamate + AMP + diphosphate + NAD(+) + H(+). The protein operates within cofactor biosynthesis; NAD(+) biosynthesis; NAD(+) from deamido-NAD(+) (L-Gln route): step 1/1. In terms of biological role, catalyzes the ATP-dependent amidation of deamido-NAD to form NAD. Uses L-glutamine as a nitrogen source. The protein is Glutamine-dependent NAD(+) synthetase (NADSYN1) of Bos taurus (Bovine).